The following is a 307-amino-acid chain: Serine/threonine-protein phosphatase PP2A-3 catalytic subunit (307 aa).

Positions 55, 57, 83, and 115 each coordinate Mn(2+). His-116 functions as the Proton donor in the catalytic mechanism. Mn(2+) is bound by residues His-165 and His-239.

The protein belongs to the PPP phosphatase family. PP-2A subfamily. The cofactor is Mn(2+).

Its subcellular location is the cytoplasm. It catalyses the reaction O-phospho-L-seryl-[protein] + H2O = L-seryl-[protein] + phosphate. It carries out the reaction O-phospho-L-threonyl-[protein] + H2O = L-threonyl-[protein] + phosphate. This chain is Serine/threonine-protein phosphatase PP2A-3 catalytic subunit (PP2A3), found in Oryza sativa subsp. indica (Rice).